A 788-amino-acid chain; its full sequence is uncharacterized protein (788 aa).

One can recognise an Adrift-type SAM-dependent 2'-O-MTase domain in the interval Glu485 to Gly693. S-adenosyl-L-methionine contacts are provided by Gly521 and Asp604. Residue Lys645 is the Proton acceptor of the active site.

This is an uncharacterized protein from Acanthamoeba polyphaga (Amoeba).